The following is a 98-amino-acid chain: Large ribosomal subunit protein uL23 (98 aa).

This sequence belongs to the universal ribosomal protein uL23 family. As to quaternary structure, part of the 50S ribosomal subunit. Contacts protein L29, and trigger factor when it is bound to the ribosome.

One of the early assembly proteins it binds 23S rRNA. One of the proteins that surrounds the polypeptide exit tunnel on the outside of the ribosome. Forms the main docking site for trigger factor binding to the ribosome. The sequence is that of Large ribosomal subunit protein uL23 from Clostridium kluyveri (strain NBRC 12016).